A 470-amino-acid polypeptide reads, in one-letter code: Uronate isomerase (470 aa).

The protein belongs to the metallo-dependent hydrolases superfamily. Uronate isomerase family.

It carries out the reaction D-glucuronate = D-fructuronate. The enzyme catalyses aldehydo-D-galacturonate = keto-D-tagaturonate. It functions in the pathway carbohydrate metabolism; pentose and glucuronate interconversion. This Sphingopyxis alaskensis (strain DSM 13593 / LMG 18877 / RB2256) (Sphingomonas alaskensis) protein is Uronate isomerase.